The primary structure comprises 763 residues: Ras and Rab interactor 1 (763 aa).

Met-1 bears the N-acetylmethionine mark. Positions 1-52 (MEDPGETGAHPLGATNLNFVPGHQQKEKPSTDPLYDTPDTRGVQAGGSQQPA) are disordered. Tyr-35 carries the post-translational modification Phosphotyrosine; by ABL1 and ABL2. Residues 68–151 (WLQLRANAAA…QLICGYCRTR (84 aa)) form the SH2 domain. Disordered stretches follow at residues 177 to 200 (LNTK…RSPQ), 238 to 273 (STET…PPRQ), and 301 to 331 (QEVD…RPRH). Residues Ser-198, Ser-246, Ser-319, and Ser-323 each carry the phosphoserine modification. The segment covering 245–257 (LSPPAVPPPPVPV) has biased composition (pro residues). A compositionally biased stretch (low complexity) spans 316–326 (SSGSPTTSPRL). Phosphoserine; by PKD/PRKD1 is present on Ser-340. One can recognise a VPS9 domain in the interval 445–587 (LSADGSLGRL…LSGLSQARAL (143 aa)). Ser-598 is modified (phosphoserine). The 83-residue stretch at 613–695 (FQHLLRVAYQ…GYLIYRRAER (83 aa)) folds into the Ras-associating domain. Position 681 is an omega-N-methylarginine (Arg-681). The interval 698 to 763 (TQGAVAEKAK…KAEGSQALEE (66 aa)) is disordered. The segment covering 727–755 (REGKPRIAVDQEGKDQARGGHIGPEEQKA) has biased composition (basic and acidic residues).

Belongs to the RIN (Ras interaction/interference) family. In terms of assembly, interacts with the GTP-bound form of Ras proteins (NRAS, HRAS and KRAS). This interaction prevents the association between RAF1 and Ras. Interacts with 14-3-3 proteins YWHAB, YWHAE and YWHAZ when phosphorylated on Ser-340. Interacts with the SH3 domain of ABL1 and ABL2. Interacts with RAB5A. The interaction with Ras is probably regulated and antagonized by the interaction with 14-3-3 proteins. The interaction with 14-3-3 proteins is regulated by phosphorylation on Ser-340. In terms of processing, phosphorylated on tyrosine residues by ABL1 and ABL2. Phosphorylation at Ser-340 by PRKD1 induces interaction with 14-3-3 proteins. As to expression, highly expressed in brain. Weakly or no expressed in other tissues, except in testis, where it is expressed at intermediate level. In brain, it is mainly expressed in postnatal forebrain neurons in which it is localized in dendrites and colocalizes with Ras.

Its subcellular location is the cytoplasm. It is found in the membrane. It localises to the cytoskeleton. Functionally, ras effector protein, which may serve as an inhibitory modulator of neuronal plasticity in aversive memory formation. Can affect Ras signaling at different levels. First, by competing with RAF1 protein for binding to activated Ras. Second, by enhancing signaling from ABL1 and ABL2, which regulate cytoskeletal remodeling. Third, by activating RAB5A, possibly by functioning as a guanine nucleotide exchange factor (GEF) for RAB5A, by exchanging bound GDP for free GTP, and facilitating Ras-activated receptor endocytosis. This chain is Ras and Rab interactor 1 (Rin1), found in Mus musculus (Mouse).